A 685-amino-acid polypeptide reads, in one-letter code: Hemocyanin subunit X (685 aa).

An N-terminal signal peptide occupies residues 1–20; that stretch reads MKYCTESLILILAVIGCISA. Residues His210, His214, and His243 each contribute to the Cu cation site. An N-linked (GlcNAc...) asparagine glycan is attached at Asn329. His367, His371, and His407 together coordinate Cu cation. Cys577 and Cys625 are joined by a disulfide.

The protein belongs to the tyrosinase family. Hemocyanin subfamily.

The protein resides in the secreted. Its subcellular location is the extracellular space. In terms of biological role, hemocyanins are copper-containing oxygen carriers occurring freely dissolved in the hemolymph of many mollusks and arthropods. This Scutigera coleoptrata (House centipede) protein is Hemocyanin subunit X (HCX).